Consider the following 379-residue polypeptide: Epoxyqueuosine reductase (379 aa).

Catalysis depends on Asp140, which acts as the Proton donor. A 4Fe-4S ferredoxin-type domain is found at 184–214 (FEPDTPASDLCGSCNQCVKACPTGSLLGEGK). 8 residues coordinate [4Fe-4S] cluster: Cys194, Cys197, Cys200, Cys204, Cys220, Cys246, Cys249, and Cys253. The stretch at 307-332 (QRNAIIILARYKDKTAVPDLIDCLQN) is one HEAT-like PBS-type repeat.

This sequence belongs to the QueG family. Monomer. Cob(II)alamin serves as cofactor. It depends on [4Fe-4S] cluster as a cofactor.

It localises to the cytoplasm. The enzyme catalyses epoxyqueuosine(34) in tRNA + AH2 = queuosine(34) in tRNA + A + H2O. It participates in tRNA modification; tRNA-queuosine biosynthesis. Catalyzes the conversion of epoxyqueuosine (oQ) to queuosine (Q), which is a hypermodified base found in the wobble positions of tRNA(Asp), tRNA(Asn), tRNA(His) and tRNA(Tyr). The protein is Epoxyqueuosine reductase of Listeria monocytogenes serovar 1/2a (strain ATCC BAA-679 / EGD-e).